The primary structure comprises 124 residues: Large ribosomal subunit protein bL17 (124 aa).

Belongs to the bacterial ribosomal protein bL17 family. Part of the 50S ribosomal subunit. Contacts protein L32.

The polypeptide is Large ribosomal subunit protein bL17 (Mycoplasma pneumoniae (strain ATCC 29342 / M129 / Subtype 1) (Mycoplasmoides pneumoniae)).